The following is a 299-amino-acid chain: uncharacterized protein (299 aa).

It belongs to the glycosyltransferase 2 family.

This is an uncharacterized protein from Mycoplasma pneumoniae (strain ATCC 29342 / M129 / Subtype 1) (Mycoplasmoides pneumoniae).